The chain runs to 173 residues: Crossover junction endodeoxyribonuclease RuvC (173 aa).

Active-site residues include D8, E67, and D139. Mg(2+)-binding residues include D8, E67, and D139.

The protein belongs to the RuvC family. Homodimer which binds Holliday junction (HJ) DNA. The HJ becomes 2-fold symmetrical on binding to RuvC with unstacked arms; it has a different conformation from HJ DNA in complex with RuvA. In the full resolvosome a probable DNA-RuvA(4)-RuvB(12)-RuvC(2) complex forms which resolves the HJ. Mg(2+) serves as cofactor.

The protein localises to the cytoplasm. It catalyses the reaction Endonucleolytic cleavage at a junction such as a reciprocal single-stranded crossover between two homologous DNA duplexes (Holliday junction).. Its function is as follows. The RuvA-RuvB-RuvC complex processes Holliday junction (HJ) DNA during genetic recombination and DNA repair. Endonuclease that resolves HJ intermediates. Cleaves cruciform DNA by making single-stranded nicks across the HJ at symmetrical positions within the homologous arms, yielding a 5'-phosphate and a 3'-hydroxyl group; requires a central core of homology in the junction. The consensus cleavage sequence is 5'-(A/T)TT(C/G)-3'. Cleavage occurs on the 3'-side of the TT dinucleotide at the point of strand exchange. HJ branch migration catalyzed by RuvA-RuvB allows RuvC to scan DNA until it finds its consensus sequence, where it cleaves and resolves the cruciform DNA. The polypeptide is Crossover junction endodeoxyribonuclease RuvC (Shigella flexneri serotype 5b (strain 8401)).